Consider the following 419-residue polypeptide: Tyrosine--tRNA ligase (419 aa).

Y34 contacts L-tyrosine. The 'HIGH' region signature appears at 39 to 48 (PTADSLHIGN). Y169 and Q173 together coordinate L-tyrosine. Positions 230-234 (KFGKT) match the 'KMSKS' region motif. K233 serves as a coordination point for ATP. In terms of domain architecture, S4 RNA-binding spans 352–419 (VPLVELLVSA…KKKYYLIRYA (68 aa)).

The protein belongs to the class-I aminoacyl-tRNA synthetase family. TyrS type 1 subfamily. In terms of assembly, homodimer.

Its subcellular location is the cytoplasm. It catalyses the reaction tRNA(Tyr) + L-tyrosine + ATP = L-tyrosyl-tRNA(Tyr) + AMP + diphosphate + H(+). Functionally, catalyzes the attachment of tyrosine to tRNA(Tyr) in a two-step reaction: tyrosine is first activated by ATP to form Tyr-AMP and then transferred to the acceptor end of tRNA(Tyr). This is Tyrosine--tRNA ligase from Geobacillus kaustophilus (strain HTA426).